The following is a 110-amino-acid chain: Large ribosomal subunit protein uL22 (110 aa).

It belongs to the universal ribosomal protein uL22 family. Part of the 50S ribosomal subunit.

Functionally, this protein binds specifically to 23S rRNA; its binding is stimulated by other ribosomal proteins, e.g. L4, L17, and L20. It is important during the early stages of 50S assembly. It makes multiple contacts with different domains of the 23S rRNA in the assembled 50S subunit and ribosome. In terms of biological role, the globular domain of the protein is located near the polypeptide exit tunnel on the outside of the subunit, while an extended beta-hairpin is found that lines the wall of the exit tunnel in the center of the 70S ribosome. In Shewanella loihica (strain ATCC BAA-1088 / PV-4), this protein is Large ribosomal subunit protein uL22.